The sequence spans 1158 residues: Serine/threonine/tyrosine-interacting-like protein 2 (1158 aa).

10 disordered regions span residues 1–21 (MATR…DEAN), 280–303 (EERE…GTGS), 315–337 (EEED…QASK), 360–392 (LLSD…VERI), 407–444 (GYRR…ESVS), 492–527 (SRRY…GSEA), 559–582 (KDLG…KNPS), 597–622 (QKKV…LAKK), 873–915 (KVKE…CSSL), and 940–1135 (SGLR…MDDE). Positions 8-19 (EEEQVVPSEEDE) are enriched in acidic residues. A Tyrosine-protein phosphatase domain is found at 132–280 (NEVDEVWPNV…LRELNEKLME (149 aa)). A compositionally biased stretch (polar residues) spans 322-337 (SHLSGSSLGKATQASK). Ser377 is subject to Phosphoserine. Phosphothreonine is present on Thr433. Residues 435–444 (SESSAWESVS) are compositionally biased toward low complexity. The span at 500–517 (KREEAADRSSEAGSRVRE) shows a compositional bias: basic and acidic residues. Ser509 is modified (phosphoserine). The span at 600–619 (VGSENKEEVVELSKGEDSAL) shows a compositional bias: basic and acidic residues. Acidic residues predominate over residues 877–890 (DEDDGVGDGDEDTD). 2 stretches are compositionally biased toward polar residues: residues 897–914 (RYSS…TCSS) and 952–966 (SDWS…TRSS). Over residues 974–983 (KSSSYKFSKS) the composition is skewed to low complexity. Phosphoserine is present on Ser985. Over residues 990 to 999 (TSSYHEANGN) the composition is skewed to polar residues. Positions 1000-1012 (SVRSTSRFSSSST) are enriched in low complexity. Position 1036 is a phosphoserine (Ser1036). Basic and acidic residues-rich tracts occupy residues 1044-1056 (RTPE…ESPE), 1064-1079 (RSRD…KSDF), and 1094-1111 (RSEE…EEGR). The span at 1126–1135 (REEEEEMDDE) shows a compositional bias: acidic residues.

The protein belongs to the protein-tyrosine phosphatase family. Non-receptor class dual specificity subfamily.

The protein localises to the cytoplasm. It localises to the myofibril. The protein resides in the sarcomere. May be required for myofiber maturation. This is Serine/threonine/tyrosine-interacting-like protein 2 from Homo sapiens (Human).